The primary structure comprises 142 residues: Large ribosomal subunit protein bL17 (142 aa).

Belongs to the bacterial ribosomal protein bL17 family. In terms of assembly, part of the 50S ribosomal subunit. Contacts protein L32.

The protein is Large ribosomal subunit protein bL17 of Brucella abortus (strain S19).